Here is a 226-residue protein sequence, read N- to C-terminus: Glutathione peroxidase 3 (226 aa).

The N-terminal stretch at 1–24 is a signal peptide; it reads MARLLQASCLLSLLLAGFVPQSRG. The active site involves Sec-73. Sec-73 is a non-standard amino acid (selenocysteine).

It belongs to the glutathione peroxidase family. Homotetramer. In terms of tissue distribution, secreted in plasma.

It is found in the secreted. The catalysed reaction is 2 glutathione + H2O2 = glutathione disulfide + 2 H2O. It catalyses the reaction tert-butyl hydroperoxide + 2 glutathione = tert-butanol + glutathione disulfide + H2O. Functionally, protects cells and enzymes from oxidative damage, by catalyzing the reduction of hydrogen peroxide, lipid peroxides and organic hydroperoxide, by glutathione. This is Glutathione peroxidase 3 from Hylobates lar (Lar gibbon).